The primary structure comprises 459 residues: MALTLFDTDEYRPPVWKSYLYQLQQEAPHPRRITCTCEVENRPKYYGREFHGMISREAADQLLIVAEGSYLIRESQRQPGTYTLALRFGSQTRNFRLYYDGKHFVGEKRFESIHDLVTDGLITLYIETKAAEYIAKMTINPIYEHVGYTTLNREPAYKKHMPVLKETHDERDSTGQDGVSEKRLTSLVRRATLKENEQIPKYEKIHNFKVHTFRGPHWCEYCANFMWGLIAQGVKCADCGLNVHKQCSKMVPNDCKPDLKHVKKVYSCDLTTLVKAHTTKRPMVVDMCIREIESRGLNSEGLYRVSGFSDLIEDVKMAFDRDGEKADISVNMYEDINIITGALKLYFRDLPIPLITYDAYPKFIESAKIMDPDEQLETLHEALKLLPPAHCETLRYLMAHLKRVTLHEKENLMNAENLGIVFGPTLMRSPELDAMAALNDIRYQRLVVELLIKNEDILF.

Residue alanine 2 is modified to N-acetylalanine. The SH2 domain maps to 49-135; sequence EFHGMISREA…IETKAAEYIA (87 aa). Threonine 192 bears the Phosphothreonine mark. A Phorbol-ester/DAG-type zinc finger spans residues 205–255; that stretch reads IHNFKVHTFRGPHWCEYCANFMWGLIAQGVKCADCGLNVHKQCSKMVPNDC. One can recognise a Rho-GAP domain in the interval 268-459; sequence CDLTTLVKAH…LLIKNEDILF (192 aa). Residue threonine 340 is modified to Phosphothreonine.

Interacts with EPHA4; effector of EPHA4 in axon guidance linking EPHA4 activation to RAC1 regulation. Post-translationally, phosphorylated. Phosphorylation is EPHA4 kinase activity-dependent. As to expression, in neurons in brain regions that are involved in learning and memory processes.

In terms of biological role, GTPase-activating protein for p21-rac and a phorbol ester receptor. Involved in the assembly of neuronal locomotor circuits as a direct effector of EPHA4 in axon guidance. The sequence is that of N-chimaerin (CHN1) from Homo sapiens (Human).